The primary structure comprises 486 residues: N-succinylglutamate 5-semialdehyde dehydrogenase (486 aa).

Position 220 to 225 (220 to 225 (GSSRTG)) interacts with NAD(+). Residues E243 and C277 contribute to the active site.

This sequence belongs to the aldehyde dehydrogenase family. AstD subfamily.

It catalyses the reaction N-succinyl-L-glutamate 5-semialdehyde + NAD(+) + H2O = N-succinyl-L-glutamate + NADH + 2 H(+). Its pathway is amino-acid degradation; L-arginine degradation via AST pathway; L-glutamate and succinate from L-arginine: step 4/5. Functionally, catalyzes the NAD-dependent reduction of succinylglutamate semialdehyde into succinylglutamate. In Shewanella baltica (strain OS185), this protein is N-succinylglutamate 5-semialdehyde dehydrogenase.